We begin with the raw amino-acid sequence, 283 residues long: Hydroxyacylglutathione hydrolase-like protein (283 aa).

Zn(2+) is bound by residues His54, His56, Asp58, His59, His110, Asp134, and His173.

This sequence belongs to the metallo-beta-lactamase superfamily. Glyoxalase II family. It depends on Zn(2+) as a cofactor.

Hydrolase acting on ester bonds. The protein is Hydroxyacylglutathione hydrolase-like protein (Haghl) of Mus musculus (Mouse).